Reading from the N-terminus, the 175-residue chain is Nucleoside-triphosphatase THEP1 (175 aa).

Residues 16–23 (GMPGVGKT) and 103–110 (VAFIDEIG) each bind ATP.

This sequence belongs to the THEP1 NTPase family.

It carries out the reaction a ribonucleoside 5'-triphosphate + H2O = a ribonucleoside 5'-diphosphate + phosphate + H(+). Has nucleotide phosphatase activity towards ATP, GTP, CTP, TTP and UTP. May hydrolyze nucleoside diphosphates with lower efficiency. This chain is Nucleoside-triphosphatase THEP1, found in Pyrobaculum calidifontis (strain DSM 21063 / JCM 11548 / VA1).